The following is a 62-amino-acid chain: Sperm protamine P1 (62 aa).

Positions 1-62 are disordered; sequence MARYRRHSRS…RRYSRRGRRR (62 aa).

The protein belongs to the protamine P1 family. As to expression, testis.

It is found in the nucleus. It localises to the chromosome. In terms of biological role, protamines substitute for histones in the chromatin of sperm during the haploid phase of spermatogenesis. They compact sperm DNA into a highly condensed, stable and inactive complex. This chain is Sperm protamine P1 (PRM1), found in Pseudantechinus bilarni (Sandstone dibbler).